The sequence spans 146 residues: Fluoride-specific ion channel FluC (146 aa).

The next 4 membrane-spanning stretches (helical) occupy residues 8-28, 47-67, 91-111, and 121-141; these read FAIA…TLTV, LANL…QALV, IGVL…AVFA, and MLLG…AAVV. Na(+) is bound by residues G95 and T98.

The protein belongs to the fluoride channel Fluc/FEX (TC 1.A.43) family.

The protein resides in the cell inner membrane. The enzyme catalyses fluoride(in) = fluoride(out). Its activity is regulated as follows. Na(+) is not transported, but it plays an essential structural role and its presence is essential for fluoride channel function. In terms of biological role, fluoride-specific ion channel. Important for reducing fluoride concentration in the cell, thus reducing its toxicity. The protein is Fluoride-specific ion channel FluC of Rhodopirellula baltica (strain DSM 10527 / NCIMB 13988 / SH1).